The chain runs to 807 residues: MSKQDSLWFKSLRWLQRQLVHTVVVPHDPFDDLNLDPSKPLAYVMKTESVSDIAALSEMTAKLGLPSPYEELEVNGVKAPRVVCLEGSKPLFGQREGGEQYIDCFKRLLSVHKQNRELDIQLVPVSLYWGRTPGKEDDTMRAAVLERQNPTWLRKCLMILFLGRHNFVQFSNAVSLRYMADEHGTDKRIAQKLARVARVHFQRQRKVMTGPQLPKRQALFHALLKSDSITKAIKEEAASKKITEAEARAKAMEYLDEVAADYSDSLVRIAERFLTWLWNKLYKGINIKGAEQVRQLHHDGHEIVYVPCHRSHMDYLLLSYILYYQGMVPPHIAAGINLNFWPAGPAFRRGGAFFIRRSFGGNKLYTAVFREYLDQLFTKGYSVEYFTEGGRSRTGRLLAPKTGMLAMTLNSVLRGVERPVTLVPVYLGYDHVMEVATYHKELSGKKKKKESVWQVFGAIRKLGNFGQGYVNFGEPITLHNFLNEQAPSWREDIAKDPDQKPSWLTPVVNTLANRVMTNINDAAAVSSVTLTSMVLLASEQNALERSQLEKQLDLYLTILKEQPYTEYTSVPEGTGHDLVSQGLELKKLQIESDPLGDIISIDQSIAITMTYYRNNIIHLMVLPSLIAACLLRKENCSREDVICVVNDFYPLLEAELFMGIDDPAQYASQILDIFVAQGLVVEAEHFEVVESKINQLLLLSGTISETMQRYAILFNLLEVKPNMERSELEKDSHRLAQRLGALHGITAPEFYDKKLYATLSVKLKELGYLADNQGCSDIKRIKERANLLLRSSVRQTIVDSVHAEQNT.

The HXXXXD motif signature appears at 308 to 313; it reads CHRSHM.

It belongs to the GPAT/DAPAT family.

Its subcellular location is the cell inner membrane. The enzyme catalyses sn-glycerol 3-phosphate + an acyl-CoA = a 1-acyl-sn-glycero-3-phosphate + CoA. It functions in the pathway phospholipid metabolism; CDP-diacylglycerol biosynthesis; CDP-diacylglycerol from sn-glycerol 3-phosphate: step 1/3. This chain is Glycerol-3-phosphate acyltransferase, found in Shewanella pealeana (strain ATCC 700345 / ANG-SQ1).